A 350-amino-acid polypeptide reads, in one-letter code: m7GpppX diphosphatase (350 aa).

At S2 the chain carries N-acetylserine. S60 bears the Phosphoserine mark. Phosphothreonine is present on T66. T66 carries the phosphothreonine; by YAK1 modification. Y70 is subject to Phosphotyrosine. At T120 the chain carries Phosphothreonine. Substrate contacts are provided by residues E171, K196, and 259-270; that span reads HYQPSYYHFHIH. Positions 266 to 270 match the Histidine triad motif motif; sequence HFHIH. H268 acts as the Nucleophile in catalysis.

Belongs to the HIT family. Homodimer. Forms heterodimer with DCS2; the interaction inhibits the DCS1 scavenger decapping activity during post-diauxic growth. In terms of processing, phosphorylated. Phosphorylation occurs upon glucose deprivation.

The protein resides in the cytoplasm. It localises to the perinuclear region. It is found in the P-body. It carries out the reaction a 5'-end (N(7)-methyl 5'-triphosphoguanosine)-ribonucleoside in mRNA + H2O = N(7)-methyl-GMP + a 5'-end diphospho-ribonucleoside in mRNA + 2 H(+). With respect to regulation, the hydrolytic product 7-methylguanosine diphosphate (m7GDP) efficiently inhibits the decapping scavenger activity and acts as a competitive inhibitor in vitro. Decapping scavenger enzyme that catalyzes the cleavage of a residual cap structure following the degradation of mRNAs by the 3'-&gt;5' exosome-mediated mRNA decay pathway. Hydrolyzes cap analog structures like 7-methylguanosine nucleoside triphosphate (m7GpppG) and tri-methyl guanosine nucleoside triphosphate (m3(2,2,7)GpppG) with up to 10 nucleotide substrates (small capped oligoribonucleotides) and specifically releases 5'-phosphorylated RNA fragments and 7-methylguanosine monophosphate (m7GMP) or tri-methyl guanosine nucleoside monophosphate (m3(2,2,7)GMP), respectively. Does not hydrolyze unmethylated cap analog (GpppG) and shows no decapping activity on intact m7GpppG-capped mRNA molecules longer than 25 nucleotides. Does not hydrolyze 7-methylguanosine diphosphate (m7GDP) and tri-methylguanosine diphosphate (m3(2,2,7)GDP) to (m(7)GMP) and m3(2,2,7)GMP, respectively. May also play a role in the 5'-&gt;3 mRNA decay pathway; m7GDP, the downstream product released by the 5'-&gt;3' mRNA mediated decapping activity, may be also converted by DCS1 to m7GMP. Binds to m7GpppG and strongly to m7GDP. May also regulate the 5'-&gt;3' exoribonucleolytic mRNA decay pathway in a cap-independent manner. Negatively regulates trehalase activity. The chain is m7GpppX diphosphatase from Saccharomyces cerevisiae (strain ATCC 204508 / S288c) (Baker's yeast).